The primary structure comprises 163 residues: Phosphopantetheine adenylyltransferase (163 aa).

T11 lines the substrate pocket. Residues 11-12 (TF) and H19 contribute to the ATP site. Positions 43, 75, and 89 each coordinate substrate. Residues 90–92 (GLR), E100, and 125–131 (YSFISST) contribute to the ATP site.

The protein belongs to the bacterial CoaD family. As to quaternary structure, homohexamer. The cofactor is Mg(2+).

Its subcellular location is the cytoplasm. The enzyme catalyses (R)-4'-phosphopantetheine + ATP + H(+) = 3'-dephospho-CoA + diphosphate. Its pathway is cofactor biosynthesis; coenzyme A biosynthesis; CoA from (R)-pantothenate: step 4/5. In terms of biological role, reversibly transfers an adenylyl group from ATP to 4'-phosphopantetheine, yielding dephospho-CoA (dPCoA) and pyrophosphate. The sequence is that of Phosphopantetheine adenylyltransferase from Acinetobacter baumannii (strain ACICU).